We begin with the raw amino-acid sequence, 220 residues long: Large ribosomal subunit protein eL15 (220 aa).

It belongs to the eukaryotic ribosomal protein eL15 family.

This is Large ribosomal subunit protein eL15 from Staphylothermus marinus (strain ATCC 43588 / DSM 3639 / JCM 9404 / F1).